The primary structure comprises 335 residues: Holliday junction branch migration complex subunit RuvB (335 aa).

Residues 4–184 (ADRIISGQAK…FGIVQRLEFY (181 aa)) are large ATPase domain (RuvB-L). ATP contacts are provided by residues isoleucine 23, arginine 24, glycine 65, lysine 68, threonine 69, threonine 70, 131-133 (EDY), arginine 174, tyrosine 184, and arginine 221. Threonine 69 contacts Mg(2+). The interval 185 to 255 (SVEDLTSIVA…VAKQALSMLD (71 aa)) is small ATPAse domain (RuvB-S). The tract at residues 258-335 (DAGFDYLDRK…RHFGLQKLSD (78 aa)) is head domain (RuvB-H). 3 residues coordinate DNA: arginine 294, arginine 313, and arginine 318.

This sequence belongs to the RuvB family. As to quaternary structure, homohexamer. Forms an RuvA(8)-RuvB(12)-Holliday junction (HJ) complex. HJ DNA is sandwiched between 2 RuvA tetramers; dsDNA enters through RuvA and exits via RuvB. An RuvB hexamer assembles on each DNA strand where it exits the tetramer. Each RuvB hexamer is contacted by two RuvA subunits (via domain III) on 2 adjacent RuvB subunits; this complex drives branch migration. In the full resolvosome a probable DNA-RuvA(4)-RuvB(12)-RuvC(2) complex forms which resolves the HJ.

The protein localises to the cytoplasm. The catalysed reaction is ATP + H2O = ADP + phosphate + H(+). Functionally, the RuvA-RuvB-RuvC complex processes Holliday junction (HJ) DNA during genetic recombination and DNA repair, while the RuvA-RuvB complex plays an important role in the rescue of blocked DNA replication forks via replication fork reversal (RFR). RuvA specifically binds to HJ cruciform DNA, conferring on it an open structure. The RuvB hexamer acts as an ATP-dependent pump, pulling dsDNA into and through the RuvAB complex. RuvB forms 2 homohexamers on either side of HJ DNA bound by 1 or 2 RuvA tetramers; 4 subunits per hexamer contact DNA at a time. Coordinated motions by a converter formed by DNA-disengaged RuvB subunits stimulates ATP hydrolysis and nucleotide exchange. Immobilization of the converter enables RuvB to convert the ATP-contained energy into a lever motion, pulling 2 nucleotides of DNA out of the RuvA tetramer per ATP hydrolyzed, thus driving DNA branch migration. The RuvB motors rotate together with the DNA substrate, which together with the progressing nucleotide cycle form the mechanistic basis for DNA recombination by continuous HJ branch migration. Branch migration allows RuvC to scan DNA until it finds its consensus sequence, where it cleaves and resolves cruciform DNA. The polypeptide is Holliday junction branch migration complex subunit RuvB (Haemophilus influenzae (strain PittEE)).